The primary structure comprises 394 residues: Argininosuccinate synthase (394 aa).

ATP is bound by residues 7-15 (AYSGGLDTS) and A34. Residues Y85 and S90 each contribute to the L-citrulline site. G115 contacts ATP. T117, N121, and D122 together coordinate L-aspartate. N121 lines the L-citrulline pocket. L-citrulline contacts are provided by R125, S176, S185, E261, and Y273.

This sequence belongs to the argininosuccinate synthase family. Type 1 subfamily. Homotetramer.

It is found in the cytoplasm. The enzyme catalyses L-citrulline + L-aspartate + ATP = 2-(N(omega)-L-arginino)succinate + AMP + diphosphate + H(+). It functions in the pathway amino-acid biosynthesis; L-arginine biosynthesis; L-arginine from L-ornithine and carbamoyl phosphate: step 2/3. This chain is Argininosuccinate synthase, found in Ehrlichia ruminantium (strain Gardel).